Consider the following 415-residue polypeptide: Coiled-coil domain-containing glutamate-rich protein 1 (415 aa).

The segment covering 1 to 11 (MTQTLDTKEDP) has biased composition (basic and acidic residues). Disordered stretches follow at residues 1 to 20 (MTQT…GWAS), 29 to 64 (FGPR…QQYG), 133 to 162 (RPPG…SPPV), 202 to 241 (QEKL…GQED), and 255 to 372 (PSLV…PLEM). Composition is skewed to basic residues over residues 31–46 (PRRR…RPRY) and 135–156 (PGRK…RRSA). Coiled coils occupy residues 197–224 (EDMR…STAS) and 264–366 (DEEK…EEEN). Residues 211–220 (ALRAQQAQAA) are compositionally biased toward low complexity. The segment covering 275 to 363 (VEEEEEGERE…EGLAEDEQTE (89 aa)) has biased composition (acidic residues).

The protein localises to the nucleus. Its function is as follows. Regulator of histone epigenetic modifications and chromatin compaction into the sperm head, required for histone-to-protamine (HTP) transition. HTP is a key event in which somatic histones are first replaced by testis-specific histone variants, then transition proteins (TNPs) are incorporated into the spermatid nucleus, and finally protamines (PRMs) replace the TNPs to promote chromatin condensation. This is Coiled-coil domain-containing glutamate-rich protein 1 (CCER1) from Bos taurus (Bovine).